The sequence spans 315 residues: Nucleotide-binding protein CGSHiEE_06315 (315 aa).

An ATP-binding site is contributed by 8–15 (GRSGAGKS). 56-59 (DIRN) is a binding site for GTP.

Belongs to the RapZ-like family.

In terms of biological role, displays ATPase and GTPase activities. This is Nucleotide-binding protein CGSHiEE_06315 from Haemophilus influenzae (strain PittEE).